The sequence spans 498 residues: MFSLQEICRKNIYFLPDWLSEHVIQRLGLYWEKHGSLQRIGDDYVLIQQDLIIPINEALRMAGEEGNDEVVQLLLLWEGNIHYAIIGALESDHYSLIRKLYDQIEDCHDILPLIQDPKIFEKCHELDKFCNILCLVLHAVKNDMLCILQEYKMHLSGEDIQVVFETACRSQKNDIVSWMGQNIAIYNSGVIFDIAFDKMNVSLLSIGYTLLFNHHINNTNENINSLLTQHLEWAAGMGLLHFMLETLKYGGDVTIIVLSEAVKYDHRKILDYFLRRKNLYQEDLEELLLLAIRADCSKKTLNLLLSYLNYSINNIRKKILQCVKEYETTVIIKILWKRKINLIEPILADFIGYHSYTYMVDFMREFSIHPEKMIKMAARESREDLIIKFSKKVCKEPKDRLHYLKSLVYTMRHKEGKQLLIYTIHNLYKACHLESKEMFNLARFYARHNAVIQFKSICHDLSKLNINIKNLLLECLGIAIKKNYFQLIKTIETDMRYE.

It belongs to the asfivirus MGF 505 family.

Its function is as follows. Plays a role in virus cell tropism, and may be required for efficient virus replication in macrophages. The polypeptide is Protein MGF 505-5R (African swine fever virus (strain Badajoz 1971 Vero-adapted) (Ba71V)).